The chain runs to 247 residues: ATP synthase subunit a (247 aa).

A run of 6 helical transmembrane segments spans residues 23–43, 90–110, 116–136, 145–165, 194–214, and 215–235; these read ISFTNSSAMMVLSICLITLFL, LFMFVLFGNLLGMMPIPVIGF, VIVTFAMALVVFVGVTVIGFA, MFFPHGAPIATAVILIPIELI, GFVVSLGAFYLIPGAVPFAFL, and SAITVLEFGIALLQAYVFTIL.

This sequence belongs to the ATPase A chain family. In terms of assembly, F-type ATPases have 2 components, CF(1) - the catalytic core - and CF(0) - the membrane proton channel. CF(1) has five subunits: alpha(3), beta(3), gamma(1), delta(1), epsilon(1). CF(0) has three main subunits: a(1), b(2) and c(9-12). The alpha and beta chains form an alternating ring which encloses part of the gamma chain. CF(1) is attached to CF(0) by a central stalk formed by the gamma and epsilon chains, while a peripheral stalk is formed by the delta and b chains.

It is found in the cell inner membrane. Its function is as follows. Key component of the proton channel; it plays a direct role in the translocation of protons across the membrane. The sequence is that of ATP synthase subunit a from Paramagnetospirillum magneticum (strain ATCC 700264 / AMB-1) (Magnetospirillum magneticum).